Reading from the N-terminus, the 150-residue chain is FCS-Like Zinc finger 15 (150 aa).

A compositionally biased stretch (low complexity) spans 12 to 28; the sequence is NNNNNNNNNNNNNNNKN. Residues 12 to 31 form a disordered region; sequence NNNNNNNNNNNNNNNKNPLS. The FLZ-type zinc finger occupies 67–111; sequence GFLEHCFLCRRKLLPAKDIYMYKGDRAFCSVECRSKQMIMDEEES. A disordered region spans residues 129–150; it reads SPATAPSRYRRDPRNQAGGFAY.

Belongs to the FLZ family. In terms of assembly, interacts with KIN10 and KIN11 via its FLZ-type zinc finger domain. Interacts with KINB1 and KINB3 via its N-terminal part. Forms homodimer and heterodimer with FLZ1, FLZ2 and FLZ7 in vitro.

The protein resides in the cytoplasm. The protein localises to the P-body. In terms of biological role, may act as an adapter to facilitate the interaction of SnRK1 complex with effector proteins, conferring tissue- and stimulus-type specific differences in the SnRK1 regulation pathway. The sequence is that of FCS-Like Zinc finger 15 from Arabidopsis thaliana (Mouse-ear cress).